Here is a 325-residue protein sequence, read N- to C-terminus: Putative HTH-type transcriptional regulatory protein HQ_3058A (325 aa).

Residues 132–186 (LADEREERGWSLGRLATELGVSRRTVSKYEDGMNASIEIAIQLEEVFDEPFSSPL) enclose the HTH cro/C1-type domain. A DNA-binding region (H-T-H motif) is located at residues 143 to 162 (LGRLATELGVSRRTVSKYED). A disordered region spans residues 189-211 (MEGAESVRDSEPTPDDPDPDADD). Acidic residues predominate over residues 200-211 (PTPDDPDPDADD).

The sequence is that of Putative HTH-type transcriptional regulatory protein HQ_3058A from Haloquadratum walsbyi (strain DSM 16790 / HBSQ001).